A 317-amino-acid polypeptide reads, in one-letter code: Transaldolase (317 aa).

Catalysis depends on lysine 132, which acts as the Schiff-base intermediate with substrate.

The protein belongs to the transaldolase family. Type 1 subfamily. Homodimer.

It is found in the cytoplasm. It carries out the reaction D-sedoheptulose 7-phosphate + D-glyceraldehyde 3-phosphate = D-erythrose 4-phosphate + beta-D-fructose 6-phosphate. Its pathway is carbohydrate degradation; pentose phosphate pathway; D-glyceraldehyde 3-phosphate and beta-D-fructose 6-phosphate from D-ribose 5-phosphate and D-xylulose 5-phosphate (non-oxidative stage): step 2/3. Functionally, transaldolase is important for the balance of metabolites in the pentose-phosphate pathway. In Haemophilus influenzae (strain PittEE), this protein is Transaldolase.